The primary structure comprises 179 residues: Large ribosomal subunit protein uL5 (179 aa).

This sequence belongs to the universal ribosomal protein uL5 family. In terms of assembly, part of the 50S ribosomal subunit; part of the 5S rRNA/L5/L18/L25 subcomplex. Contacts the 5S rRNA and the P site tRNA. Forms a bridge to the 30S subunit in the 70S ribosome.

Its function is as follows. This is one of the proteins that bind and probably mediate the attachment of the 5S RNA into the large ribosomal subunit, where it forms part of the central protuberance. In the 70S ribosome it contacts protein S13 of the 30S subunit (bridge B1b), connecting the 2 subunits; this bridge is implicated in subunit movement. Contacts the P site tRNA; the 5S rRNA and some of its associated proteins might help stabilize positioning of ribosome-bound tRNAs. The chain is Large ribosomal subunit protein uL5 from Rickettsia africae (strain ESF-5).